The chain runs to 83 residues: Small ribosomal subunit protein bS20 (83 aa).

This sequence belongs to the bacterial ribosomal protein bS20 family.

Binds directly to 16S ribosomal RNA. This chain is Small ribosomal subunit protein bS20, found in Staphylococcus aureus (strain JH1).